The following is a 122-amino-acid chain: Large ribosomal subunit protein bL19 (122 aa).

This sequence belongs to the bacterial ribosomal protein bL19 family.

This protein is located at the 30S-50S ribosomal subunit interface and may play a role in the structure and function of the aminoacyl-tRNA binding site. In Chlamydia felis (strain Fe/C-56) (Chlamydophila felis), this protein is Large ribosomal subunit protein bL19.